Reading from the N-terminus, the 253-residue chain is Peptidase inhibitor R3HDML (253 aa).

An N-terminal signal peptide occupies residues 1–24; the sequence is MPLLPSTVGLAGLLFWAGQAVNAL. A propeptide spanning residues 25–56 is cleaved from the precursor; sequence IMPNATPAPAQPESTAMRLLSGLEVPRYRRKR. The SCP domain maps to 67–207; that stretch reads LDYHNHIRAS…HRAAYLVCNY (141 aa). A glycan (N-linked (GlcNAc...) asparagine) is linked at asparagine 120.

This sequence belongs to the CRISP family.

The protein resides in the secreted. Its function is as follows. Putative serine protease inhibitor. The chain is Peptidase inhibitor R3HDML (R3HDML) from Homo sapiens (Human).